We begin with the raw amino-acid sequence, 472 residues long: Karilysin (472 aa).

The first 20 residues, 1 to 20 (MKRFILLFFLSTIAIFKVYS), serve as a signal peptide directing secretion. A propeptide spans 21–34 (QRLYDNGPLTGDNN) (activation peptide). Zn(2+)-binding residues include H102, D104, H117, H133, and H155. The active-site Proton donor/acceptor is E156. 2 residues coordinate Zn(2+): H159 and H165. The propeptide at 196 to 386 (YGYPFSISGP…AVSCSRTISP (191 aa)) is removed in short form. The propeptide at 387–472 (FTLSPNPATD…QTYTQKLIKK (86 aa)) is removed in long form.

This sequence belongs to the peptidase M10A family. Zn(2+) is required as a cofactor. Post-translationally, processes itself into the mature 18-kDa enzyme (Kly18) through sequential autoproteolytic cleavage at both the N- and C-termini. However, the maturation intermediate Kly38 is found to be more active than Kly18 and the rate for its processing is slow, which raises the question as to whether Kly38 is a physiologically relevant entity.

It localises to the secreted. With respect to regulation, autoprocessing and proteolytic activity are completely inhibited by EDTA and 1,10-phenanthroline in vitro. Proteolytic activity is 3-fold enhanced by Ca(2+) due to stabilization of the protein structure but inhibited by an excess of Zn(2+). Inhibitory studies of karilysin identified several phage display-selected peptides with apparent inhibition constants (Ki) in the micromolar range, among which is the tetrapeptide SWFP (Ki=10.7 uM). In terms of biological role, metalloprotease able to cleave casein, gelatin, elastin, fibrinogen and fibronectin. Shows exclusive preference for hydrophobic residues, especially Leu, Tyr and Met, at the P1' position of substrates, and for Pro or Ala at P3. Can efficiently cleave the antimicrobial peptide LL-37 which is a component of the immune system, leading to a significant reduction of its bactericidal activity. Is also able to inhibit all pathways of the human complement system. The classical and lectin complement pathways are inhibited because of the efficient degradation of mannose-binding lectin, ficolin-2, ficolin-3, and C4 by karilysin, whereas inhibition of the terminal pathway is caused by cleavage of C5. Thus, karilysin appears to be a major virulence factor of T.forsythia that contributes to evasion of the human immune response and periodontal disease. Seems to act synergistically with gingipains from the periodontal pathogen P.gingivalis present at the same sites of infection. This is Karilysin (kly) from Tannerella forsythia (strain ATCC 43037 / JCM 10827 / CCUG 21028 A / KCTC 5666 / FDC 338) (Bacteroides forsythus).